The primary structure comprises 427 residues: TNF receptor-associated factor family protein DDB_G0285149 (427 aa).

The RING-type zinc finger occupies 20-65 (CIVCTDLLSESHDKIQVNQCPHGHCLCSDCWTKQIENKKKECPICR). TRAF-type zinc fingers lie at residues 122–178 (THFK…INKD) and 178–234 (DHLE…KHQA). One can recognise an MATH domain in the interval 284-415 (KYSNQWVIEN…GNKLTIKFEI (132 aa)).

This sequence belongs to the TNF receptor-associated factor family. A subfamily.

The protein localises to the cytoplasm. Its function is as follows. Probable adapter protein and signal transducer that links members of the tumor necrosis factor receptor family to different signaling pathways by association with the receptor cytoplasmic domain and kinases. The chain is TNF receptor-associated factor family protein DDB_G0285149 from Dictyostelium discoideum (Social amoeba).